Consider the following 346-residue polypeptide: Endosome-associated-trafficking regulator 1 (346 aa).

Positions 46 to 67 are enriched in polar residues; sequence FVSSNSKRAFSKDSNQSTTQFR. 3 disordered regions span residues 46–77, 93–129, and 153–173; these read FVSS…DGNL, LQED…GDES, and SPPA…SDSE. Positions 170–317 form a coiled coil; it reads SDSEEGLRLL…SGAQSSIKQL (148 aa).

Belongs to the ENTR1 family.

It is found in the cytoplasm. The protein localises to the early endosome. It localises to the endosome. The protein resides in the recycling endosome. Its subcellular location is the midbody. It is found in the cytoskeleton. The protein localises to the microtubule organizing center. It localises to the centrosome. The protein resides in the cilium basal body. Its function is as follows. Endosome-associated protein that plays a role in membrane receptor sorting, cytokinesis and ciliogenesis. The chain is Endosome-associated-trafficking regulator 1 from Xenopus tropicalis (Western clawed frog).